We begin with the raw amino-acid sequence, 254 residues long: Alcohol dehydrogenase (254 aa).

10–33 provides a ligand contact to NAD(+); that stretch reads FVAGLGGIGLDTSRELVKRDLKNL. A substrate-binding site is contributed by Ser-138. Residue Tyr-151 is the Proton acceptor of the active site.

This sequence belongs to the short-chain dehydrogenases/reductases (SDR) family. In terms of assembly, homodimer.

The enzyme catalyses a primary alcohol + NAD(+) = an aldehyde + NADH + H(+). It catalyses the reaction a secondary alcohol + NAD(+) = a ketone + NADH + H(+). In Drosophila guanche (Fruit fly), this protein is Alcohol dehydrogenase (Adh).